A 345-amino-acid polypeptide reads, in one-letter code: uncharacterized protein (345 aa).

Positions 1-198 (MDVLSAVLLA…LSEGLLDHEE (198 aa)) constitute a CNNM transmembrane domain. Helical transmembrane passes span 3–23 (VLSA…FVGA) and 95–115 (VPPA…HVLL). CBS domains lie at 217–280 (AVPL…PQTV) and 285–342 (VVRP…MRDG). Residues 312–332 (LALVTADNGSVVGMVALEDVV) traverse the membrane as a helical segment.

This sequence belongs to the TerC family.

Its subcellular location is the cell membrane. This is an uncharacterized protein from Mycobacterium tuberculosis (strain CDC 1551 / Oshkosh).